Here is a 461-residue protein sequence, read N- to C-terminus: Type IV secretion system protein PtlD homolog (461 aa).

The N-terminal stretch at 1-24 is a signal peptide; that stretch reads MAGLSRILLSCTLACLLAGQAAQA. Transmembrane regions (helical) follow at residues 118–138, 232–252, 253–273, 294–314, and 333–353; these read LQPL…YALL, WLLC…LAAS, LLIV…LFLV, ALVF…VLAG, and MLAA…VPLA. Residues 376 to 411 are compositionally biased toward low complexity; it reads AHRQAAARQYAPRPAAAAAAAGPHQAGTYAASATPA. A disordered region spans residues 376-461; sequence AHRQAAARQY…RVLPRKPNLP (86 aa). The segment covering 439 to 453 has biased composition (basic and acidic residues); sequence VRRDDRPAPAPDRRV.

The protein localises to the cell membrane. This Bordetella bronchiseptica (strain ATCC BAA-588 / NCTC 13252 / RB50) (Alcaligenes bronchisepticus) protein is Type IV secretion system protein PtlD homolog (ptlD).